A 396-amino-acid chain; its full sequence is Lysophospholipid transporter LplT (396 aa).

Topologically, residues Met1–Lys17 are periplasmic. A helical transmembrane segment spans residues Ala18–Leu38. Residues Ala39–Pro52 are Cytoplasmic-facing. The helical transmembrane segment at Ile53 to Ala73 threads the bilayer. The Periplasmic portion of the chain corresponds to Asp74–Leu90. A helical membrane pass occupies residues Leu91–Val111. Residues Gly112 to Ala144 are Cytoplasmic-facing. The helical transmembrane segment at Ile145–Val165 threads the bilayer. Residue Ala166 is a topological domain, periplasmic. The chain crosses the membrane as a helical span at residues Leu167 to Leu187. Residues Ala188–Ser225 are Cytoplasmic-facing. The helical transmembrane segment at Leu226–Leu246 threads the bilayer. The Periplasmic segment spans residues Gly247–Thr255. Residues Tyr256–Val276 form a helical membrane-spanning segment. The Cytoplasmic portion of the chain corresponds to Thr277–Glu279. Residues Thr280–Leu300 form a helical membrane-spanning segment. Over Gln301–Glu303 the chain is Periplasmic. The chain crosses the membrane as a helical span at residues Leu304 to Pro324. Residues Leu325–Ala342 are Cytoplasmic-facing. The helical transmembrane segment at Ile343–Leu363 threads the bilayer. Residues Ala364–Val365 lie on the Periplasmic side of the membrane. The chain crosses the membrane as a helical span at residues Met366 to Ile386. Over Thr387 to His396 the chain is Cytoplasmic.

This sequence belongs to the major facilitator superfamily. LplT (TC 2.A.1.42) family.

It localises to the cell inner membrane. Catalyzes the facilitated diffusion of 2-acyl-glycero-3-phosphoethanolamine (2-acyl-GPE) into the cell. This is Lysophospholipid transporter LplT from Shigella flexneri.